Consider the following 394-residue polypeptide: 1-deoxy-D-xylulose 5-phosphate reductoisomerase (394 aa).

NADPH-binding residues include Thr-10, Gly-11, Ser-12, Ile-13, Gly-38, Arg-39, Asn-40, and Asn-123. Lys-124 contacts 1-deoxy-D-xylulose 5-phosphate. Glu-125 contributes to the NADPH binding site. Asp-149 provides a ligand contact to Mn(2+). 1-deoxy-D-xylulose 5-phosphate contacts are provided by Ser-150, Glu-151, Ser-175, and His-198. Glu-151 provides a ligand contact to Mn(2+). Residue Gly-204 coordinates NADPH. Residues Ser-211, Asn-216, Lys-217, and Glu-220 each coordinate 1-deoxy-D-xylulose 5-phosphate. Residue Glu-220 coordinates Mn(2+).

It belongs to the DXR family. Mg(2+) serves as cofactor. Mn(2+) is required as a cofactor.

It catalyses the reaction 2-C-methyl-D-erythritol 4-phosphate + NADP(+) = 1-deoxy-D-xylulose 5-phosphate + NADPH + H(+). It functions in the pathway isoprenoid biosynthesis; isopentenyl diphosphate biosynthesis via DXP pathway; isopentenyl diphosphate from 1-deoxy-D-xylulose 5-phosphate: step 1/6. Functionally, catalyzes the NADPH-dependent rearrangement and reduction of 1-deoxy-D-xylulose-5-phosphate (DXP) to 2-C-methyl-D-erythritol 4-phosphate (MEP). The chain is 1-deoxy-D-xylulose 5-phosphate reductoisomerase from Cereibacter sphaeroides (strain ATCC 17023 / DSM 158 / JCM 6121 / CCUG 31486 / LMG 2827 / NBRC 12203 / NCIMB 8253 / ATH 2.4.1.) (Rhodobacter sphaeroides).